The chain runs to 478 residues: TFIIA-alpha and beta-like factor (478 aa).

The tract at residues 309–427 (VKQPRNIEEP…SGDDVSEQDV (119 aa)) is disordered. Polar residues predominate over residues 390–401 (SISNEDSATNSS). The segment covering 411–427 (VEEDPLNSGDDVSEQDV) has biased composition (acidic residues).

This sequence belongs to the TFIIA subunit 1 family. As to expression, testis specific. Detected in adult testis mostly in round and elongating spermatids (at protein level). Detected in testis.

The protein localises to the nucleus. In terms of biological role, may function as a testis specific transcription factor. Binds DNA in conjunction with GTF2A2 and TBP (the TATA-binding protein) and together with GTF2A2, allows mRNA transcription. The protein is TFIIA-alpha and beta-like factor (GTF2A1L) of Homo sapiens (Human).